Here is a 341-residue protein sequence, read N- to C-terminus: GTPase Obg (341 aa).

The region spanning 1-159 is the Obg domain; that stretch reads MKFLDQAKVY…RAIWLRLKLI (159 aa). One can recognise an OBG-type G domain in the interval 160 to 327; it reads ADAGLVGLPN…VLRAGAHIIE (168 aa). GTP is bound by residues 166 to 173, 191 to 195, 212 to 215, 279 to 282, and 308 to 310; these read GLPNAGKS, FTTLH, DIPG, SQID, and SAV. The Mg(2+) site is built by Ser-173 and Thr-193.

Belongs to the TRAFAC class OBG-HflX-like GTPase superfamily. OBG GTPase family. In terms of assembly, monomer. It depends on Mg(2+) as a cofactor.

It is found in the cytoplasm. Its function is as follows. An essential GTPase which binds GTP, GDP and possibly (p)ppGpp with moderate affinity, with high nucleotide exchange rates and a fairly low GTP hydrolysis rate. Plays a role in control of the cell cycle, stress response, ribosome biogenesis and in those bacteria that undergo differentiation, in morphogenesis control. The chain is GTPase Obg from Bartonella tribocorum (strain CIP 105476 / IBS 506).